The primary structure comprises 317 residues: Lipopolysaccharide heptosyltransferase 1 (317 aa).

9 residues coordinate ADP-L-glycero-beta-D-manno-heptose: Thr187, Thr188, Lys192, Glu222, Met242, Asp261, Thr262, Gly263, and His266.

This sequence belongs to the glycosyltransferase 9 family.

Its subcellular location is the cell inner membrane. The enzyme catalyses an alpha-Kdo-(2-&gt;4)-alpha-Kdo-(2-&gt;6)-lipid A + ADP-L-glycero-beta-D-manno-heptose = an L-alpha-D-Hep-(1-&gt;5)-[alpha-Kdo-(2-&gt;4)]-alpha-Kdo-(2-&gt;6)-lipid A + ADP + H(+). The protein operates within bacterial outer membrane biogenesis; LPS core biosynthesis. Its function is as follows. Glycosyltransferase involved in the biosynthesis of the core oligosaccharide region of lipopolysaccharide (LPS). Catalyzes the addition of the first heptose unit to one 3-deoxy-D-manno-octulosonic acid (Kdo) residue of the Kdo2-lipid A module. This is Lipopolysaccharide heptosyltransferase 1 from Salmonella typhimurium (strain LT2 / SGSC1412 / ATCC 700720).